The primary structure comprises 249 residues: MALTDLSAKVVLVDIEGTTTSITFVHDVLFPYAKANAGQYLSETWETDDTKQIVEELTQLPQYTEYASTLETRPEINAAHIADFSRYLIEKDLKVTPLKTLQGHIWAKGYASGELKGHVYEDVAVAFQAWSDAGLRIAVYSSGSVAAQKLIFQHSIAGDLLPLLSAHFDTNVGHKQQTESYTRIAESLGVEPQHVLFLTDVPEEASAARDAGMQTVLLARPGNAPLTAEHTSAFPVVANFVALQSLKQP.

Positions 14 and 16 each coordinate Mg(2+). Substrate contacts are provided by residues 141-142 (SS) and Lys-175. Asp-200 contacts Mg(2+).

It belongs to the HAD-like hydrolase superfamily. MasA/MtnC family. In terms of assembly, monomer. The cofactor is Mg(2+).

It localises to the cytoplasm. The protein resides in the nucleus. The catalysed reaction is 5-methylsulfanyl-2,3-dioxopentyl phosphate + H2O = 1,2-dihydroxy-5-(methylsulfanyl)pent-1-en-3-one + phosphate. It functions in the pathway amino-acid biosynthesis; L-methionine biosynthesis via salvage pathway; L-methionine from S-methyl-5-thio-alpha-D-ribose 1-phosphate: step 3/6. The protein operates within amino-acid biosynthesis; L-methionine biosynthesis via salvage pathway; L-methionine from S-methyl-5-thio-alpha-D-ribose 1-phosphate: step 4/6. Functionally, bifunctional enzyme that catalyzes the enolization of 2,3-diketo-5-methylthiopentyl-1-phosphate (DK-MTP-1-P) into the intermediate 2-hydroxy-3-keto-5-methylthiopentenyl-1-phosphate (HK-MTPenyl-1-P), which is then dephosphorylated to form the acireductone 1,2-dihydroxy-3-keto-5-methylthiopentene (DHK-MTPene). The protein is Enolase-phosphatase E1 of Drosophila mojavensis (Fruit fly).